The sequence spans 771 residues: Probable exo-1,4-beta-xylosidase xlnD (771 aa).

The signal sequence occupies residues 1–25 (MARIMSWHYGKAITLFVCLGPVALS). Asn-67 carries an N-linked (GlcNAc...) asparagine glycan. Asp-293 is an active-site residue. Asn-305, Asn-345, Asn-423, and Asn-464 each carry an N-linked (GlcNAc...) asparagine glycan.

It belongs to the glycosyl hydrolase 3 family.

The protein resides in the secreted. The catalysed reaction is Hydrolysis of (1-&gt;4)-beta-D-xylans, to remove successive D-xylose residues from the non-reducing termini.. It participates in glycan degradation; xylan degradation. Its function is as follows. Xylan 1,4-beta-xylosidase involved in the hydrolysis of xylan, a major structural heterogeneous polysaccharide found in plant biomass representing the second most abundant polysaccharide in the biosphere, after cellulose. This Neosartorya fischeri (strain ATCC 1020 / DSM 3700 / CBS 544.65 / FGSC A1164 / JCM 1740 / NRRL 181 / WB 181) (Aspergillus fischerianus) protein is Probable exo-1,4-beta-xylosidase xlnD (xlnD).